Consider the following 228-residue polypeptide: Mitochondrial assembly of ribosomal large subunit protein 1 (228 aa).

The segment at 53 to 77 (SLTRGLHHGPQPEERTAGDARLQPG) is disordered.

This sequence belongs to the Iojap/RsfS family. Associates with the mitochondrial ribosome large subunit (39S) via interaction with MRPL12 and/or MRPL14. The interaction generates steric hindrance that is expected to prevent premature association of the 28S and 39S ribosomal subunits. Identified in a complex composed of MALSU1, MIEF1 upstream open reading frame protein and NDUFAB1; within the trimeric complex, MIEF1 upstream open reading frame protein functions as a bridging scaffold that interacts with MALSU1 on one side, and with NDUFAB1 on the other side. Interacts with MRPL12 and MRPL14.

It localises to the mitochondrion matrix. In terms of biological role, required for normal mitochondrial ribosome function and mitochondrial translation. May play a role in ribosome biogenesis by preventing premature association of the 28S and 39S ribosomal subunits. Interacts with mitochondrial ribosomal protein uL14m (MRPL14), probably blocking formation of intersubunit bridge B8, preventing association of the 28S and 39S ribosomal subunits. Addition to isolated mitochondrial ribosomal subunits partially inhibits translation, probably by interfering with the association of the 28S and 39S ribosomal subunits and the formation of functional ribosomes. May also participate in the assembly and/or regulation of the stability of the large subunit of the mitochondrial ribosome. May function as a ribosomal silencing factor. The polypeptide is Mitochondrial assembly of ribosomal large subunit protein 1 (Malsu1) (Mus musculus (Mouse)).